The following is a 667-amino-acid chain: Holliday junction recognition protein (667 aa).

The interval 78 to 126 (LNGQAPEGDSESSGADTSLEENWPSCSSAMREASGDPRQRQPAVPGNTL) is disordered. A phosphoserine mark is found at serine 169, serine 185, and serine 195. 2 disordered regions span residues 181 to 201 (ISAK…GQGP) and 279 to 317 (RRRP…EPGK). The span at 279–297 (RRRPSRKQGLHKNRTHCPR) shows a compositional bias: basic residues. Phosphoserine is present on residues serine 388, serine 424, serine 449, and serine 462. Residues 443–530 (YRSGSKSPGS…NSEPTGKAVW (88 aa)) are disordered. Residues 466 to 482 (GREKTERPGEALEDLRG) are compositionally biased toward basic and acidic residues. The span at 496–515 (SCPSPEGSPSRSPSHSQLSS) shows a compositional bias: low complexity. Residue lysine 554 forms a Glycyl lysine isopeptide (Lys-Gly) (interchain with G-Cter in SUMO2) linkage. The residue at position 567 (serine 567) is a Phosphoserine. The tract at residues 596 to 617 (KRLNPDSPQQSSQKRSISPGCH) is disordered. Over residues 601–611 (DSPQQSSQKRS) the composition is skewed to polar residues. Position 613 is a phosphoserine (serine 613).

As to quaternary structure, interacts with CENPA (via CATD domain); the interaction is direct and specific for CENPA since it does not interact with H3.1- or H3.3-containing nucleosomes. Heterotrimer composed of HJURP, CENPA and histone H4, where HJURP interacts with the dimer formed by CENPA and histone H4 and prevents tetramerization of CENPA and H4. Identified in a centromere complex containing histones H2A, H2B and H4, and at least CENPA, CENPB, CENPC, CENPT, CENPN, HJURP, SUPT16H, SSRP1 and RSF1. Interacts with 14-3-3 family members in a phosphorylation-dependent manner. Interacts with MSH5 and NBN.

Its subcellular location is the nucleus. The protein localises to the nucleolus. The protein resides in the chromosome. It localises to the centromere. In terms of biological role, centromeric protein that plays a central role in the incorporation and maintenance of histone H3-like variant CENPA at centromeres. Acts as a specific chaperone for CENPA and is required for the incorporation of newly synthesized CENPA molecules into nucleosomes at replicated centromeres. Prevents CENPA-H4 tetramerization and prevents premature DNA binding by the CENPA-H4 tetramer. Directly binds Holliday junctions. The chain is Holliday junction recognition protein (Hjurp) from Mus musculus (Mouse).